The chain runs to 858 residues: Heat shock protein 105 kDa (858 aa).

Residue Ser2 is modified to N-acetylserine. Lys471 carries the post-translational modification N6-acetyllysine. Disordered regions lie at residues 500 to 585 and 801 to 858; these read KVPT…PPEA and VNQP…MDLD. Residues 504-515 show a composition bias toward acidic residues; it reads EEDDGSSVEADM. A phosphoserine mark is found at Ser509 and Ser510. Polar residues predominate over residues 533-549; that stretch reads QQDNSEAGTQPQVQTDG. Residue Ser558 is modified to Phosphoserine. 2 stretches are compositionally biased toward basic and acidic residues: residues 564–585 and 806–815; these read EENK…PPEA and PKIESPKLER. Ser810 carries the post-translational modification Phosphoserine. The residue at position 816 (Thr816) is a Phosphothreonine. The segment covering 822–834 has biased composition (basic and acidic residues); sequence LDKKEDLEGKDNF.

The protein belongs to the heat shock protein 70 family. As to quaternary structure, interacts with HSPA8/HSC70. Interacts with HSPA1A (via NBD) and HSPA1B (via NBD). In terms of processing, phosphorylation on Ser-509 may be important for regulation of the HSPA8/HSC70 chaperone activity. In terms of tissue distribution, predominantly expressed in the brain and also found in the liver.

The protein localises to the cytoplasm. Acts as a nucleotide-exchange factor (NEF) for chaperone proteins HSPA1A and HSPA1B, promoting the release of ADP from HSPA1A/B thereby triggering substrate release. Prevents the aggregation of denatured proteins in cells under severe stress, on which the ATP levels decrease markedly. Inhibits HSPA8/HSC70 ATPase and chaperone activities. The chain is Heat shock protein 105 kDa (HSPH1) from Cricetulus griseus (Chinese hamster).